Reading from the N-terminus, the 388-residue chain is Na(+)/H(+) antiporter NhaA (388 aa).

Residues 1 to 11 (MKHLHRFFSSD) lie on the Cytoplasmic side of the membrane. Residues 12–31 (ASGGIILIIAAILAMIMANS) form a helical membrane-spanning segment. At 32–58 (GATSGWYHDFLETPVQLRVGSLEINKN) the chain is on the periplasmic side. The helical transmembrane segment at 59 to 80 (MLLWINDALMAVFFLLVGLEVK) threads the bilayer. Residues 81-96 (RELMQGSLASLRQAAF) are Cytoplasmic-facing. A helical transmembrane segment spans residues 97–116 (PVIAAIGGMIVPALLYLAFN). At 117–122 (YADPIT) the chain is on the periplasmic side. A helical membrane pass occupies residues 123–130 (REGWAIPA). The Cytoplasmic segment spans residues 131–154 (ATDIAFALGVLALLGSRVPLVLKI). The helical transmembrane segment at 155 to 176 (FLMALAIIDDLGAIIIIALFYT) threads the bilayer. Residues 177–180 (NDLS) lie on the Periplasmic side of the membrane. Residues 181 to 200 (MASLGVAAVAIAVLAVLNLC) traverse the membrane as a helical segment. Topologically, residues 201 to 204 (GVRR) are cytoplasmic. A helical membrane pass occupies residues 205 to 222 (TGVYILVGVVLWTAVLKS). A topological domain (periplasmic) is located at residue G223. A helical transmembrane segment spans residues 224 to 236 (VHATLAGVIVGFF). At 237–253 (IPLKEKHGRSPAKRLEH) the chain is on the cytoplasmic side. The chain crosses the membrane as a helical span at residues 254-272 (VLHPWVAYLILPLFAFANA). Residues 273-286 (GVSLQGVTLDGLTS) lie on the Periplasmic side of the membrane. The chain crosses the membrane as a helical span at residues 287–310 (ILPLGIIAGLLIGKPLGISLFCWL). The Cytoplasmic segment spans residues 311 to 339 (ALRLKLAHLPEGTTYQQIMVVGILCGIGF). Residues 340–350 (TMSIFIASLAF) traverse the membrane as a helical segment. Residues 351–357 (GSVDPEL) lie on the Periplasmic side of the membrane. Residues 358-380 (INWAKLGILVGSISSAVIGYSWL) traverse the membrane as a helical segment. The Cytoplasmic segment spans residues 381 to 388 (RVRLRPSV).

The protein belongs to the NhaA Na(+)/H(+) (TC 2.A.33) antiporter family.

It localises to the cell inner membrane. The enzyme catalyses Na(+)(in) + 2 H(+)(out) = Na(+)(out) + 2 H(+)(in). Na(+)/H(+) antiporter that extrudes sodium in exchange for external protons. The chain is Na(+)/H(+) antiporter NhaA from Shigella flexneri.